The following is a 627-amino-acid chain: MDVTKIKDPSFLKDLSYEELDGLSQDIRTFLIEKCAVTGGHIGANLGVVELTIALHKVFNSPKDKLIFDVGHQTYIHKILTGRAEQFDTLRQYKGLSGFPKLNESEHDVWEAGHSSTSLSAAMGMAKARDIQQQHYEVVPIIGDGALTGGMALEALNHIGHDKTNMTIILNDNEMSIAPNVGAMHNMFGRLRTNSNYNRAKSDIDLFLSKLPGGHKLRDSADRVKDSLKYLVVNGIFFEELGIKYIGPVDGHSYKELEEALLTSKRIDGPVIVHVITKKGKGYHPAENDKIGTWHGLGPYKLETGEVLKGSAQGPSWSQFFSDTVQSFAERDKTIAAITPAMPVGSKLTKFQKELPQQFFDVGIAEQHAVTMAAGMAANGMKPYVAIYSTFLQRAYDQMLHDVDRQNLHVVFGIDRSGLVGADGETHQGVFDISFLTHMPNMTVMMPKDENEAYHLLYNAFYEYEGPIAIRYPRGNGYGVKIDSIPNSVVRGDWEVLHEGTDVIVLSFGPTLKLIEAVREELLKEGVSIEVVNARFIKPLDYHYLAAAAKRNIPVLTVEEAMLSGGFGAAISNHYSDLDLDVHVKRIGIDDEYIEHGDVSMLLDDIGINKANLIHEIKQLAISHEES.

Thiamine diphosphate is bound by residues histidine 72 and 113–115 (GHS). Aspartate 144 provides a ligand contact to Mg(2+). Thiamine diphosphate-binding positions include 145 to 146 (GA), asparagine 173, tyrosine 283, and glutamate 366. Residue asparagine 173 participates in Mg(2+) binding.

Belongs to the transketolase family. DXPS subfamily. Homodimer. The cofactor is Mg(2+). Requires thiamine diphosphate as cofactor.

It carries out the reaction D-glyceraldehyde 3-phosphate + pyruvate + H(+) = 1-deoxy-D-xylulose 5-phosphate + CO2. Its pathway is metabolic intermediate biosynthesis; 1-deoxy-D-xylulose 5-phosphate biosynthesis; 1-deoxy-D-xylulose 5-phosphate from D-glyceraldehyde 3-phosphate and pyruvate: step 1/1. Its function is as follows. Catalyzes the acyloin condensation reaction between C atoms 2 and 3 of pyruvate and glyceraldehyde 3-phosphate to yield 1-deoxy-D-xylulose-5-phosphate (DXP). The sequence is that of 1-deoxy-D-xylulose-5-phosphate synthase from Macrococcus caseolyticus (strain JCSC5402) (Macrococcoides caseolyticum).